The sequence spans 188 residues: Crossover junction endodeoxyribonuclease RuvC (188 aa).

Active-site residues include Asp-7, Glu-68, and Asp-141. Residues Asp-7, Glu-68, and Asp-141 each coordinate Mg(2+).

It belongs to the RuvC family. Homodimer which binds Holliday junction (HJ) DNA. The HJ becomes 2-fold symmetrical on binding to RuvC with unstacked arms; it has a different conformation from HJ DNA in complex with RuvA. In the full resolvosome a probable DNA-RuvA(4)-RuvB(12)-RuvC(2) complex forms which resolves the HJ. Mg(2+) serves as cofactor.

The protein localises to the cytoplasm. The catalysed reaction is Endonucleolytic cleavage at a junction such as a reciprocal single-stranded crossover between two homologous DNA duplexes (Holliday junction).. The RuvA-RuvB-RuvC complex processes Holliday junction (HJ) DNA during genetic recombination and DNA repair. Endonuclease that resolves HJ intermediates. Cleaves cruciform DNA by making single-stranded nicks across the HJ at symmetrical positions within the homologous arms, yielding a 5'-phosphate and a 3'-hydroxyl group; requires a central core of homology in the junction. The consensus cleavage sequence is 5'-(A/T)TT(C/G)-3'. Cleavage occurs on the 3'-side of the TT dinucleotide at the point of strand exchange. HJ branch migration catalyzed by RuvA-RuvB allows RuvC to scan DNA until it finds its consensus sequence, where it cleaves and resolves the cruciform DNA. The chain is Crossover junction endodeoxyribonuclease RuvC from Mycobacterium tuberculosis (strain ATCC 25177 / H37Ra).